Here is a 1111-residue protein sequence, read N- to C-terminus: Protein STU1 (1111 aa).

HEAT repeat units follow at residues 95–133 (ALPLIVEKLGDQKEKFRQLASQALATLYKVAPVEVERSV) and 167–205 (YVPTMMELLEDADGMVRDVAKSTVIELFRNAPGPAKSDL). Disordered stretches follow at residues 225–245 (ELNPTSSAPASQPDPESVEPS) and 476–751 (RLLQ…VDEE). A compositionally biased stretch (polar residues) spans 502–511 (SKSTMGTSKP). Positions 704 to 714 (PREEQRFVKPV) are enriched in basic and acidic residues.

It belongs to the CLASP family. Interacts with microtubules.

The protein resides in the cytoplasm. It is found in the cytoskeleton. It localises to the nucleus. The protein localises to the spindle. Microtubule binding protein that promotes the stabilization of dynamic microtubules. Required for mitotic spindle formation. This chain is Protein STU1 (STU1), found in Chaetomium globosum (strain ATCC 6205 / CBS 148.51 / DSM 1962 / NBRC 6347 / NRRL 1970) (Soil fungus).